A 182-amino-acid polypeptide reads, in one-letter code: UPF0316 protein BCQ_3166 (182 aa).

Helical transmembrane passes span 6–26 (LIFV…ILLV), 32–52 (SAAA…GIVF), and 58–78 (WMNI…GGYI).

This sequence belongs to the UPF0316 family.

It localises to the cell membrane. In Bacillus cereus (strain Q1), this protein is UPF0316 protein BCQ_3166.